The primary structure comprises 448 residues: uncharacterized protein (448 aa).

The span at 187–198 (SKGDRGDADDRG) shows a compositional bias: basic and acidic residues. Disordered regions lie at residues 187 to 221 (SKGD…LPTR), 243 to 270 (LQVP…GATM), and 291 to 361 (LSGL…LPNG). Residues 243–261 (LQVPGGTSAAIPSASSTPS) show a composition bias toward low complexity. A compositionally biased stretch (basic and acidic residues) spans 307-334 (FDERGQEVRDPADYEHSNEPDERRADDR).

It to M.tuberculosis Rv0025 and Rv0739.

This is an uncharacterized protein from Mycobacterium tuberculosis (strain ATCC 25618 / H37Rv).